Reading from the N-terminus, the 279-residue chain is Protein K1 (279 aa).

The signal sequence occupies residues 1–18 (MFLYVVCSLAVCFRGLLS). Over 19–220 (LSLQSSPNLC…TYLYIQEHLL (202 aa)) the chain is Extracellular. Residues 221–241 (VFMTLVALIGTMCGILGTIIF) form a helical membrane-spanning segment. Residues 242 to 279 (AHCQKQRDSNKTVPQQLQDYYSLHDLCTEDYTQPVDWY) lie on the Cytoplasmic side of the membrane.

As to quaternary structure, homooligomer.

It is found in the host membrane. Promotes host cell survival pathways and may contribute to pathogenesis by preventing infected cells from undergoing apoptosis. Acts in host B-cells by mimicking the activated B-cell receptor complex. The cytoplasmic tail of K1 can induce the phosphorylation of a number of different kinases, leading to the activation of survival signaling pathways. The sequence is that of Protein K1 (K1) from Human herpesvirus 8 type P (isolate GK18) (HHV-8).